Consider the following 246-residue polypeptide: MKYDIIGDIHGCFQEFQNLTEKLGYNWSSGLPVHPDQRKLAFVGDITDRGPHSLRMIEIVWELVIHKKEAYYAPGNHCNKLYRFFLGRNVTVAHGLETTVAEYEALPSHKQNIIKEKFITLYEQSPLYHILDEKRVIVCHAGIRQDYIGRRDKKVQTFVLYGDITGEKHADGSPVRRDWAQEYKGQAWIVYGHTPVAEPRFVNQTVNIDTGAVFGGKLTGLRYPEMETISVPSSLPFVAEKFRPIS.

This sequence belongs to the PrpE family. Ni(2+) serves as cofactor.

It catalyses the reaction P(1),P(4)-bis(5'-guanosyl) tetraphosphate + H2O = GMP + GTP + 2 H(+). Its function is as follows. Asymmetrically hydrolyzes Ap4p to yield AMP and ATP. This chain is Bis(5'-nucleosyl)-tetraphosphatase PrpE [asymmetrical], found in Bacillus cereus (strain ATCC 14579 / DSM 31 / CCUG 7414 / JCM 2152 / NBRC 15305 / NCIMB 9373 / NCTC 2599 / NRRL B-3711).